The chain runs to 347 residues: NADH-ubiquinone oxidoreductase chain 2 (347 aa).

11 helical membrane passes run 3–23 (PLILLLITLTVILGTLIVMMS), 25–45 (HWLMIWMGFEMNMLAVIPLLM), 59–79 (YFLTQATASMLLMLAIIINLM), 96–116 (IIMTLALMMKLGLAPFHFWVP), 122–142 (ISLTSGLILLTWQKLAPLSIL), 148–168 (VINPDLLLMASMLSIAIGGWG), 178–198 (ILAYSSIAHMGWMMSVLAFNP), 202–222 (LLNLFMYILMTSTTFMLFMVA), 240–260 (ITTSILIMMLSLGGLPPLAGF), 276–296 (IILATLMAITALLNLFFYIRL), and 326–346 (LPPLIIMSTLTLPLAPAMILL).

Belongs to the complex I subunit 2 family. As to quaternary structure, core subunit of respiratory chain NADH dehydrogenase (Complex I) which is composed of 45 different subunits. Interacts with TMEM242.

It localises to the mitochondrion inner membrane. It catalyses the reaction a ubiquinone + NADH + 5 H(+)(in) = a ubiquinol + NAD(+) + 4 H(+)(out). Core subunit of the mitochondrial membrane respiratory chain NADH dehydrogenase (Complex I) which catalyzes electron transfer from NADH through the respiratory chain, using ubiquinone as an electron acceptor. Essential for the catalytic activity and assembly of complex I. The sequence is that of NADH-ubiquinone oxidoreductase chain 2 from Peropteryx kappleri (Greater dog-like bat).